Consider the following 855-residue polypeptide: Nuclear valosin-containing protein-like (855 aa).

Residues 1-219 are interaction with RPL5; that stretch reads MKPRPGVFVD…SLLESDKKRK (219 aa). The Nucleolar localization signal signature appears at 49-52; it reads RRKR. At Lys-70 the chain carries N6-acetyllysine. Residues 83-234 are disordered; the sequence is LAKRARQDEE…KGNKRKTENL (152 aa). Positions 85–88 match the Nuclear localization signal motif; it reads KRAR. Acidic residues predominate over residues 90 to 110; that stretch reads DEEDEYTESYSDDDSNMEDYP. Polar residues-rich tracts occupy residues 113–123 and 131–157; these read QSANPMNSSLL and SESVSTTPKWGQREATTSTPLLTSKTG. Ser-133 is modified (phosphoserine). A Phosphothreonine modification is found at Thr-137. Lys-155 is subject to N6-acetyllysine. Ser-190 is modified (phosphoserine). Lys-207 is covalently cross-linked (Glycyl lysine isopeptide (Lys-Gly) (interchain with G-Cter in SUMO2)). Residues Ser-210 and Ser-214 each carry the phosphoserine modification. Basic residues predominate over residues 217-228; the sequence is KRKGRAKGKGNK. The short motif at 217–231 is the Nuclear localization signal element; the sequence is KRKGRAKGKGNKRKT. Residues 266–473 form an interaction with WDR74 region; the sequence is VGGNDATLKE…LTPGFVGADL (208 aa). 304–311 contributes to the ATP binding site; that stretch reads GPPGCGKT. The interval 496-523 is disordered; the sequence is QKKKPEIEGLPSEGDQEERLGAEPTSET. Residue 621–628 participates in ATP binding; it reads GPPGCGKT.

The protein belongs to the AAA ATPase family. Interacts with NCL/nucleolin. Isoform 1 and isoform 2 interact with TERT and isoform 1 exhibits a higher binding affinity for TERT compared to isoform 2. Isoform 1 interacts with MTREX in an ATP-dependent manner; the interaction is required to associate NVL with nuclear RNA exosome. Isoform 1 interacts with RPL5 in an ATP-dependent manner. Interacts with WDR74 (through WDR repeats); the interaction is independent of RNA or pre-60S ribosome particles.

Its subcellular location is the nucleus. It is found in the nucleolus. The protein localises to the nucleoplasm. Participates in the assembly of the telomerase holoenzyme and effecting of telomerase activity via its interaction with TERT. Involved in both early and late stages of the pre-rRNA processing pathways. Spatiotemporally regulates 60S ribosomal subunit biogenesis in the nucleolus. Catalyzes the release of specific assembly factors, such as WDR74, from pre-60S ribosomal particles through the ATPase activity. In Mus musculus (Mouse), this protein is Nuclear valosin-containing protein-like.